The sequence spans 271 residues: Inactive phospholipid phosphatase 7 (271 aa).

The segment at 1–69 is disordered; sequence MPVSQSRARA…RQSQQLPEED (69 aa). Residues 1–112 are Cytoplasmic-facing; it reads MPVSQSRARA…AASWASARSM (112 aa). Over residues 24 to 36 the composition is skewed to polar residues; it reads SLNQPPKGTQEPR. Ser-43 and Ser-62 each carry phosphoserine. Residues 70-91 form an interaction with MTOR region; that stretch reads CMQLNPSFKGIAFNSLLAIDIC. A helical membrane pass occupies residues 113–133; that stretch reads VKLIGITSHGIPWIGGTILCL. The Extracellular portion of the chain corresponds to 134 to 141; sequence VRSSTLAG. The chain crosses the membrane as a helical span at residues 142 to 162; it reads QEVLMNLLLALLLDIMTVAGV. Residues 163–202 lie on the Cytoplasmic side of the membrane; sequence QKLIKRRGPYETSPGLLDYLTMDIYAFPAGHASRAAMVSK. The chain crosses the membrane as a helical span at residues 203–223; the sequence is FFLSHLVLAVPLRVLLVLWAF. Residues 224–239 are Extracellular-facing; it reads CVGLSRVMIGRHHITD. A helical transmembrane segment spans residues 240–260; that stretch reads VISGFIIGYFQFRLVELVWMS. At 261 to 271 the chain is on the cytoplasmic side; it reads SNTCQMLISAW.

It belongs to the PA-phosphatase related phosphoesterase family. As to quaternary structure, homo- and heterooligomer. Interacts with MTOR; controls MTOR-dependent IGF2 expression during myoblast differentiation.

The protein resides in the nucleus envelope. It is found in the endoplasmic reticulum membrane. Its subcellular location is the membrane. Plays a role as negative regulator of myoblast differentiation, in part through effects on MTOR signaling. Has no detectable enzymatic activity. The polypeptide is Inactive phospholipid phosphatase 7 (Rattus norvegicus (Rat)).